The chain runs to 361 residues: MALTRLLIKDFRNIESADLALASGFNFLVGPNGSGKTSVLEAIYTLGHGRAFRSLQAGRVIRHECAEFVLHGRVDANERESSVGLSKSRQGDTKVRIDGTDGHKVAELAQLLPMQLITPEGFTLLNGGPKFRRAFLDWGCFHNEPGFFMAWSNLKRLLKQRNAALRQVSRYTQIRAWDQEIIPLAERISEWRAAYSDAIAADISATCALFLPEFALSFSFQRGWDKESDYGELLERQFVRDRALTYTAVGPHKADFRIRADGTPVEDLLSRGQLKLLMCALRLAQGEFLTRQSGRRCLYLLDDFASELDTGRRRLLAERLKATQAQVFVSAVSAEQVADMVGEKGKMFRVEHGKIEVQPQD.

Residue 30–37 participates in ATP binding; sequence GPNGSGKT.

Belongs to the RecF family.

The protein resides in the cytoplasm. In terms of biological role, the RecF protein is involved in DNA metabolism; it is required for DNA replication and normal SOS inducibility. RecF binds preferentially to single-stranded, linear DNA. It also seems to bind ATP. In Yersinia enterocolitica serotype O:8 / biotype 1B (strain NCTC 13174 / 8081), this protein is DNA replication and repair protein RecF.